A 382-amino-acid polypeptide reads, in one-letter code: Succinate--CoA ligase [ADP-forming] subunit beta (382 aa).

ATP contacts are provided by residues lysine 46, 53-55, valine 95, and glutamate 100; that span reads GRG. The Mg(2+) site is built by asparagine 192 and aspartate 206. Substrate contacts are provided by residues asparagine 257 and 314–316; that span reads GIT.

The protein belongs to the succinate/malate CoA ligase beta subunit family. In terms of assembly, heterotetramer of two alpha and two beta subunits. The cofactor is Mg(2+).

It carries out the reaction succinate + ATP + CoA = succinyl-CoA + ADP + phosphate. It catalyses the reaction GTP + succinate + CoA = succinyl-CoA + GDP + phosphate. It participates in carbohydrate metabolism; tricarboxylic acid cycle; succinate from succinyl-CoA (ligase route): step 1/1. In terms of biological role, succinyl-CoA synthetase functions in the citric acid cycle (TCA), coupling the hydrolysis of succinyl-CoA to the synthesis of either ATP or GTP and thus represents the only step of substrate-level phosphorylation in the TCA. The beta subunit provides nucleotide specificity of the enzyme and binds the substrate succinate, while the binding sites for coenzyme A and phosphate are found in the alpha subunit. This chain is Succinate--CoA ligase [ADP-forming] subunit beta, found in Bacteroides fragilis (strain ATCC 25285 / DSM 2151 / CCUG 4856 / JCM 11019 / LMG 10263 / NCTC 9343 / Onslow / VPI 2553 / EN-2).